Consider the following 143-residue polypeptide: Large ribosomal subunit protein uL13 (143 aa).

This sequence belongs to the universal ribosomal protein uL13 family. As to quaternary structure, part of the 50S ribosomal subunit.

This protein is one of the early assembly proteins of the 50S ribosomal subunit, although it is not seen to bind rRNA by itself. It is important during the early stages of 50S assembly. In Prochlorococcus marinus (strain MIT 9312), this protein is Large ribosomal subunit protein uL13.